A 409-amino-acid polypeptide reads, in one-letter code: Lissencephaly-1 homolog (409 aa).

The LisH domain occupies 7–39 (QKEELNKAIADYLHQCGFEDTLNAFKQDANMPG). A coiled-coil region spans residues 54-80 (TSVIRLQKKVMDLETRLSEAEKEVHHG). Residues 72–95 (EAEKEVHHGGGPKKTRSPEDWIPR) form a disordered region. 7 WD repeats span residues 104–145 (GHRS…RTLK), 146–187 (GHTD…RTLH), 188–229 (GHDH…KTFQ), 231–269 (HGEW…CKCD), 272–332 (DHDH…CLVT), 335–374 (GHDN…CAKT), and 377–409 (AHEH…WECR).

It belongs to the WD repeat LIS1/nudF family.

It is found in the cytoplasm. Its subcellular location is the cytoskeleton. It localises to the microtubule organizing center. The protein resides in the centrosome. Positively regulates the activity of the minus-end directed microtubule motor protein dynein. May enhance dynein-mediated microtubule sliding by targeting dynein to the microtubule plus end. Required for several dynein- and microtubule-dependent processes. In Nematostella vectensis (Starlet sea anemone), this protein is Lissencephaly-1 homolog.